A 410-amino-acid polypeptide reads, in one-letter code: Na(+)/H(+) antiporter NhaS4 (410 aa).

A run of 11 helical transmembrane segments spans residues 7–27 (LLIL…GLLF), 33–53 (PPVI…LGLL), 69–89 (FLYL…GLEL), 107–127 (VSIF…LYSL), 135–155 (FIPF…PVLA), 173–193 (LTCA…AIAV), 199–219 (IFGA…MVTL), 241–261 (LLTF…WIGI), 291–311 (FVST…TDLG), 319–339 (WAVC…GVYV), and 376–396 (GVIS…TTII).

It belongs to the monovalent cation:proton antiporter 2 (CPA2) transporter (TC 2.A.37) family.

Its subcellular location is the membrane. Na(+)/H(+) antiporter. The protein is Na(+)/H(+) antiporter NhaS4 (nhaS4) of Synechocystis sp. (strain ATCC 27184 / PCC 6803 / Kazusa).